The primary structure comprises 394 residues: MAKEKFERSKPHVNIGTIGHVDHGKTTLTAAITTVLAKKGLSELRSFDSIDNAPEEKERGITINTSHVEYQTANRHYAHVDCPGHADYVKNMVTGAAQMDGAIIVCAATDGPMPQTREHILLARQVNVPRLVVFLNKCDMVDDEEMLELVEMEMRELLSFYDFDGDNTPIIRGSALGALNGVPQWEDKVMELMDAVDTWIPLPPRDIDKPFLMPVEDVFSITGRGTVATGRIEAGIIHVGDEVEILGLGEDKKSVVTGVEMFRKLLDQGEAGDNVGLLLRGIDKNEIKRGMILCKPGQVKAHSKFKAEVYILKKEEGGRHTPFHNKYRPQFYLRTMDCTGEITLPEGTEMVMPGDNVTITVELIYPVALNVGLRFAIREGGRTVGAGQITELLD.

Residues 10-205 (KPHVNIGTIG…VDTWIPLPPR (196 aa)) form the tr-type G domain. A G1 region spans residues 19–26 (GHVDHGKT). 19–26 (GHVDHGKT) is a GTP binding site. Residue T26 coordinates Mg(2+). Residues 60 to 64 (GITIN) form a G2 region. The interval 81 to 84 (DCPG) is G3. GTP-binding positions include 81 to 85 (DCPGH) and 136 to 139 (NKCD). The G4 stretch occupies residues 136 to 139 (NKCD). Positions 174–176 (SAL) are G5.

It belongs to the TRAFAC class translation factor GTPase superfamily. Classic translation factor GTPase family. EF-Tu/EF-1A subfamily. As to quaternary structure, monomer.

It is found in the cytoplasm. The catalysed reaction is GTP + H2O = GDP + phosphate + H(+). Functionally, GTP hydrolase that promotes the GTP-dependent binding of aminoacyl-tRNA to the A-site of ribosomes during protein biosynthesis. The chain is Elongation factor Tu from Phocaeicola vulgatus (strain ATCC 8482 / DSM 1447 / JCM 5826 / CCUG 4940 / NBRC 14291 / NCTC 11154) (Bacteroides vulgatus).